The primary structure comprises 241 residues: Polycomb group RING finger protein 3 (241 aa).

The segment at cysteine 17 to arginine 56 adopts an RING-type zinc-finger fold. A disordered region spans residues alanine 115–histidine 148. A compositionally biased stretch (basic and acidic residues) spans glutamine 117–glutamate 139. An interaction with BCORL1 region spans residues asparagine 131 to leucine 241.

As to quaternary structure, component of a PRC1-like complex that contains PCGF3, RNF2 and RYBP. Interacts with RNF2. Interacts with CBX6, CBX7 and CBX8. Interacts with BCORL1.

The protein localises to the nucleus. It localises to the nucleoplasm. Component of a Polycomb group (PcG) multiprotein PRC1-like complex, a complex class required to maintain the transcriptionally repressive state of many genes, including Hox genes, throughout development. PcG PRC1 complex acts via chromatin remodeling and modification of histones; it mediates monoubiquitination of histone H2A 'Lys-119', rendering chromatin heritably changed in its expressibility. Within the PRC1-like complex, regulates RNF2 ubiquitin ligase activity. Plays a redundant role with PCGF5 as part of a PRC1-like complex that mediates monoubiquitination of histone H2A 'Lys-119' on the X chromosome and is required for normal silencing of one copy of the X chromosome in XX females. This chain is Polycomb group RING finger protein 3 (PcgF3), found in Mus musculus (Mouse).